The chain runs to 2200 residues: Bromodomain and WD repeat-containing DDB_G0285837 (2200 aa).

Disordered stretches follow at residues 137–178 (GFND…SNTN), 194–245 (VTPT…TTPP), and 259–288 (DIQQQQQQQQQQQQQTISKSKNEDINNNNN). Low complexity-rich tracts occupy residues 161–176 (NNNNNNSSSSSSSNSN), 203–242 (NTTNTTTTTTATTTTTTTTTTTNNTNVQTTPTNTTNTTLT), and 259–273 (DIQQQQQQQQQQQQQ). WD repeat units lie at residues 352 to 391 (GHKAPTYCLQFDKSGRLYFTGSDDHLVKVWSTYSGRLIAT), 394 to 433 (GHLGDITDMCTSFDNSLLATASNDNVIRIWNLNSNQYDSI), 442 to 483 (SVNN…HVIS), 548 to 586 (GKTNEITGTTMNKGGTLIVASVDSSLKIWSTLFNPPKLV), 591 to 630 (GHPTTILALQYSHGSDAIVSGSYDGTVIIWRHSGGPKWDH), 653 to 691 (RSKATFKNVIWSHDDRFIITTDYNMIRVWNSLDGSFHLE), 694 to 736 (EHTS…KKFV), and 741 to 780 (GFQCQILDGCFSPDGQKFIVTNSTGKWFMFELGLGSDINN). 2 stretches are compositionally biased toward acidic residues: residues 918 to 933 (DDEIIFPSDPSDEDFN) and 955 to 968 (QDDDDDDDDDEDYD). 4 disordered regions span residues 918–1180 (DDEI…NHLT), 1262–1297 (NNNNNNNNNNNNNNNNNNNNNNNGVDDQQINSDDDD), 1461–1538 (ENNQ…NNNN), and 1662–1703 (NFNS…NNNN). The segment covering 974–1000 (MSTRKKSKIKADKRKKRLLKQSKKFTR) has biased composition (basic residues). The span at 1052-1074 (GEIEMDDDDQYLNDNILDSDDND) shows a compositional bias: acidic residues. Positions 1109-1132 (SSDNSSENDSSANGSDSDYSGSKS) are enriched in low complexity. Positions 1133-1164 (NKNKRGDKSKRNKKGKKNVKNKKVQKRGRKKS) are enriched in basic residues. Composition is skewed to low complexity over residues 1262-1292 (NNNNNNNNNNNNNNNNNNNNNNNGVDDQQIN) and 1461-1525 (ENNQ…NSLN). Residues 1722–1823 (EKIENLKKEM…HRISDILKEA (102 aa)) form the Bromo domain. Residues 1850–2200 (DKDDSQLDDE…RGRGRPPKSN (351 aa)) are disordered. Over residues 1878–1888 (LANNNHGNNKS) the composition is skewed to low complexity. The span at 1910–1920 (TGKNITRSLLS) shows a compositional bias: polar residues. Residues 1945-1958 (TTTTTTTTTTTSST) are compositionally biased toward low complexity. Composition is skewed to acidic residues over residues 2016-2028 (DYNDDDDDDDNDG), 2057-2073 (EDEDEDDNNQEEDEEDY), and 2104-2113 (SEEEEDEDQS). Over residues 2114–2124 (DVNSNNNSDNE) the composition is skewed to low complexity. The span at 2125 to 2138 (SGGEDGYSGEDGSE) shows a compositional bias: acidic residues. A compositionally biased stretch (low complexity) spans 2170–2185 (SFKNNNNNNNINNNVN). The segment covering 2190-2200 (KRGRGRPPKSN) has biased composition (basic residues).

The polypeptide is Bromodomain and WD repeat-containing DDB_G0285837 (Dictyostelium discoideum (Social amoeba)).